We begin with the raw amino-acid sequence, 576 residues long: Arginine--tRNA ligase (576 aa).

Positions 122-132 match the 'HIGH' region motif; sequence PNVAKEMHVGH.

It belongs to the class-I aminoacyl-tRNA synthetase family. As to quaternary structure, monomer.

The protein resides in the cytoplasm. It carries out the reaction tRNA(Arg) + L-arginine + ATP = L-arginyl-tRNA(Arg) + AMP + diphosphate. This chain is Arginine--tRNA ligase, found in Serratia proteamaculans (strain 568).